Here is a 232-residue protein sequence, read N- to C-terminus: Large ribosomal subunit protein uL1 (232 aa).

Belongs to the universal ribosomal protein uL1 family. As to quaternary structure, part of the 50S ribosomal subunit.

In terms of biological role, binds directly to 23S rRNA. The L1 stalk is quite mobile in the ribosome, and is involved in E site tRNA release. Functionally, protein L1 is also a translational repressor protein, it controls the translation of the L11 operon by binding to its mRNA. The polypeptide is Large ribosomal subunit protein uL1 (Francisella tularensis subsp. holarctica (strain LVS)).